The primary structure comprises 408 residues: MELVQPFSGFLVYDLKQTPEDFQVEEILPSDLIQKTGKWMIFRLQKSGWNTLDALLRISKESKVSIFEIGYAGKKDRHASTSQYISCQKPLRVPKELTKVIQLDKIGFSKKSLSTELNVGNRFQLVLRNLLEKEIESIRNNFEKITKNGFINYYDSQRFSRFHSEFRLPILPFFKGDAETCLKLILTDPFPGEKKQARDRKKILYDLWGNWSQCEKWSKSKLEKNIFSNLKKEKKPTQKTYSDLILRFPEEELLMLVSSFQSLIWNEFVSEIFISDNFTGVWIKTKTGPLFFPGESSIQSVPFSKNLPVPGNPGIYKLEYSKKEIDTLKKILNQNGLTESVLDSSPFPIIKMNSFERKVRILPNDFQIGDFEEDDQHPGKRKVKISFRLPSGVYATMLIKRLMLRSRI.

Residue D76 is the Nucleophile of the active site. One can recognise a TRUD domain in the interval 149–362; that stretch reads GFINYYDSQR…NSFERKVRIL (214 aa).

Belongs to the pseudouridine synthase TruD family.

It carries out the reaction uridine(13) in tRNA = pseudouridine(13) in tRNA. In terms of biological role, responsible for synthesis of pseudouridine from uracil-13 in transfer RNAs. The chain is tRNA pseudouridine synthase D from Leptospira interrogans serogroup Icterohaemorrhagiae serovar Lai (strain 56601).